A 176-amino-acid chain; its full sequence is MNIVNSKILFLSFTLLLLLQSSIVESDSICLSSGVASTVAMAAPGSVQKGDEEWRAILSPEQFRILRQKGTEYPGTGEYVNFDKEGVYGCVGCNAPLYKSTTKFNAGCGWPAFFEGIPGAITRTTDPDGRRIEINCATCGGHLGHVFKGEGFATPTDERHCVNSVSLKFTPAASSL.

An N-terminal signal peptide occupies residues 1 to 26 (MNIVNSKILFLSFTLLLLLQSSIVES). One can recognise a MsrB domain in the interval 51-172 (DEEWRAILSP…NSVSLKFTPA (122 aa)). Cys-90, Cys-93, Cys-136, and Cys-139 together coordinate Zn(2+). Cys-108 and Cys-161 are disulfide-bonded. Cys-161 (nucleophile) is an active-site residue.

The protein belongs to the MsrB Met sulfoxide reductase family. Requires Zn(2+) as cofactor.

Its subcellular location is the endoplasmic reticulum. The catalysed reaction is L-methionyl-[protein] + [thioredoxin]-disulfide + H2O = L-methionyl-(R)-S-oxide-[protein] + [thioredoxin]-dithiol. Catalyzes the reduction of methionine sulfoxide (MetSO) to methionine in proteins. Plays a protective role against oxidative stress by restoring activity to proteins that have been inactivated by methionine oxidation. Involved in cold tolerance. Eliminates MetSO and reactive oxygen species that accumulate at the ER during cold acclimation. MSRB family specifically reduces the MetSO R-enantiomer. In Arabidopsis thaliana (Mouse-ear cress), this protein is Peptide methionine sulfoxide reductase B3 (MSRB3).